The chain runs to 65 residues: Lantibiotic lacticin 3147 A2 (65 aa).

Positions 1–36 (MKEKNMKKNDTIELQLGKYLEDDMIELAEGDESHGG) are excised as a propeptide. Threonine 37 is modified (2-oxobutanoic acid). 2,3-didehydrobutyrine is present on residues threonine 38 and threonine 41. Serine 45 and serine 48 each carry 2,3-didehydroalanine (Ser). Residues 52-56 (STNTC) constitute a cross-link (lanthionine (Ser-Cys)). Cross-links (beta-methyllanthionine (Thr-Cys)) lie at residues 58–61 (TTKC) and 62–65 (TRAC).

Maturation of lantibiotics involves the enzymatic conversion of Thr, and Ser into dehydrated AA and the formation of thioether bonds with cysteine. This is followed by membrane translocation and cleavage of the modified precursor. In terms of processing, it is not established whether the 2,3-didehydrobutyrines are the E- or Z-isomers. In the NMR model they were assumed to be the Z-isomer.

It localises to the secreted. Functionally, lanthionine-containing peptide antibiotic (lantibiotic) active on Gram-positive bacteria. The bactericidal activity of lantibiotics is based on depolarization of energized bacterial cytoplasmic membranes, initiated by the formation of aqueous transmembrane pores. When present individually lacticin 3147 A2 exhibits weak activity towards L.lactis strain AM2 and L.lactis strain HP, and no activity towards L.lactis strain IFPL359, but when combined with lacticin 3147 A1 it displays strong activity towards all three strains. This is Lantibiotic lacticin 3147 A2 from Lactococcus lactis subsp. lactis (Streptococcus lactis).